The following is a 679-amino-acid chain: UvrABC system protein B (679 aa).

In terms of domain architecture, Helicase ATP-binding spans 25–176 (EGVNGGERYQ…NLRGSLRDLV (152 aa)). Residue 38–45 (GATGTGKT) coordinates ATP. The Beta-hairpin motif lies at 91 to 114 (YYDYYQPEAYVPVSDTYIAKTASI). The 163-residue stretch at 429-591 (QVDDLLGEIR…ITPTAAGKKA (163 aa)) folds into the Helicase C-terminal domain. The 36-residue stretch at 638–673 (PELIDQLELKMKESAKKLDFEEAANLRDRIKKLRQK) folds into the UVR domain.

This sequence belongs to the UvrB family. In terms of assembly, forms a heterotetramer with UvrA during the search for lesions. Interacts with UvrC in an incision complex.

Its subcellular location is the cytoplasm. In terms of biological role, the UvrABC repair system catalyzes the recognition and processing of DNA lesions. A damage recognition complex composed of 2 UvrA and 2 UvrB subunits scans DNA for abnormalities. Upon binding of the UvrA(2)B(2) complex to a putative damaged site, the DNA wraps around one UvrB monomer. DNA wrap is dependent on ATP binding by UvrB and probably causes local melting of the DNA helix, facilitating insertion of UvrB beta-hairpin between the DNA strands. Then UvrB probes one DNA strand for the presence of a lesion. If a lesion is found the UvrA subunits dissociate and the UvrB-DNA preincision complex is formed. This complex is subsequently bound by UvrC and the second UvrB is released. If no lesion is found, the DNA wraps around the other UvrB subunit that will check the other stand for damage. The protein is UvrABC system protein B of Synechococcus sp. (strain CC9311).